A 259-amino-acid chain; its full sequence is MNLLEKTRKINAMLQKAAGRPVNFKEMAETLCDVIEANVFVVSRRGKLLGFAIKQSIENERMKRMLEERQFPEEYTRNLFNITETSPNIDINSEYTAFPVENRDLFKTGLTTIVPINGGGERLGTLILSRLDREFDNDDLILAEYGATVVGMEILREKAEEIEEEARSKAVVQMAISSLSYSELEAIEHIFEELDGTEGLLVASKIADRVGITRSVIVNALRKLESAGVIESRSLGMKGTYIKVLNDKFLTELEKLKSN.

The GAF domain stretch occupies residues methionine 1–leucine 155. Residues alanine 203–arginine 222 constitute a DNA-binding region (H-T-H motif). Residue serine 215 is modified to Phosphoserine.

This sequence belongs to the CodY family.

It localises to the cytoplasm. DNA-binding global transcriptional regulator which is involved in the adaptive response to starvation and acts by directly or indirectly controlling the expression of numerous genes in response to nutrient availability. During rapid exponential growth, CodY is highly active and represses genes whose products allow adaptation to nutrient depletion. The chain is Global transcriptional regulator CodY from Geobacillus thermodenitrificans (strain NG80-2).